Reading from the N-terminus, the 476-residue chain is Probable cytosolic Fe-S cluster assembly factor GI11683 (476 aa).

The [4Fe-4S] cluster site is built by Cys-23, Cys-68, Cys-71, Cys-74, Cys-187, Cys-243, Cys-395, and Cys-399.

It belongs to the NARF family.

Functionally, component of the cytosolic iron-sulfur (Fe/S) protein assembly machinery. Required for maturation of extramitochondrial Fe/S proteins. This chain is Probable cytosolic Fe-S cluster assembly factor GI11683, found in Drosophila mojavensis (Fruit fly).